The chain runs to 633 residues: Phosphomethylpyrimidine synthase (633 aa).

Substrate-binding positions include Asn245, Met274, Tyr303, His339, 359–361 (SRG), 400–403 (DGLR), and Glu439. His443 contributes to the Zn(2+) binding site. A substrate-binding site is contributed by Tyr466. His507 is a binding site for Zn(2+). 3 residues coordinate [4Fe-4S] cluster: Cys587, Cys590, and Cys595.

It belongs to the ThiC family. Homodimer. [4Fe-4S] cluster is required as a cofactor.

The catalysed reaction is 5-amino-1-(5-phospho-beta-D-ribosyl)imidazole + S-adenosyl-L-methionine = 4-amino-2-methyl-5-(phosphooxymethyl)pyrimidine + CO + 5'-deoxyadenosine + formate + L-methionine + 3 H(+). It participates in cofactor biosynthesis; thiamine diphosphate biosynthesis. In terms of biological role, catalyzes the synthesis of the hydroxymethylpyrimidine phosphate (HMP-P) moiety of thiamine from aminoimidazole ribotide (AIR) in a radical S-adenosyl-L-methionine (SAM)-dependent reaction. The protein is Phosphomethylpyrimidine synthase of Neisseria meningitidis serogroup A / serotype 4A (strain DSM 15465 / Z2491).